Consider the following 104-residue polypeptide: Large ribosomal subunit protein bL21 (104 aa).

Belongs to the bacterial ribosomal protein bL21 family. Part of the 50S ribosomal subunit. Contacts protein L20.

Its function is as follows. This protein binds to 23S rRNA in the presence of protein L20. The sequence is that of Large ribosomal subunit protein bL21 from Kosmotoga olearia (strain ATCC BAA-1733 / DSM 21960 / TBF 19.5.1).